The sequence spans 277 residues: Large ribosomal subunit protein uL2 (277 aa).

Residues 212–277 are disordered; that stretch reads RWRGKRPHVR…KFIVRGRKSK (66 aa). Over residues 254–277 the composition is skewed to basic residues; that stretch reads TAGKKTRDKKKASTKFIVRGRKSK.

Belongs to the universal ribosomal protein uL2 family. As to quaternary structure, part of the 50S ribosomal subunit. Forms a bridge to the 30S subunit in the 70S ribosome.

One of the primary rRNA binding proteins. Required for association of the 30S and 50S subunits to form the 70S ribosome, for tRNA binding and peptide bond formation. It has been suggested to have peptidyltransferase activity; this is somewhat controversial. Makes several contacts with the 16S rRNA in the 70S ribosome. The chain is Large ribosomal subunit protein uL2 from Leuconostoc mesenteroides subsp. mesenteroides (strain ATCC 8293 / DSM 20343 / BCRC 11652 / CCM 1803 / JCM 6124 / NCDO 523 / NBRC 100496 / NCIMB 8023 / NCTC 12954 / NRRL B-1118 / 37Y).